The primary structure comprises 80 residues: Cytochrome c oxidase subunit 7B, mitochondrial (80 aa).

Residues 1-24 (MLPLAKNALSRLQVRSIQQVVARQ) constitute a mitochondrion transit peptide. The Mitochondrial matrix segment spans residues 25-39 (SHQKRAPSFHDKYGN). Residues 40–60 (AILAGGAIFCVSTWTYTATQI) form a helical membrane-spanning segment. At 61-80 (GIEWNMSPVGRVTPKEWRDQ) the chain is on the mitochondrial intermembrane side.

The protein belongs to the cytochrome c oxidase VIIb family. Component of the cytochrome c oxidase (complex IV, CIV), a multisubunit enzyme composed of 14 subunits. The complex is composed of a catalytic core of 3 subunits MT-CO1, MT-CO2 and MT-CO3, encoded in the mitochondrial DNA, and 11 supernumerary subunits COX4I, COX5A, COX5B, COX6A, COX6B, COX6C, COX7A, COX7B, COX7C, COX8 and NDUFA4, which are encoded in the nuclear genome. The complex exists as a monomer or a dimer and forms supercomplexes (SCs) in the inner mitochondrial membrane with NADH-ubiquinone oxidoreductase (complex I, CI) and ubiquinol-cytochrome c oxidoreductase (cytochrome b-c1 complex, complex III, CIII), resulting in different assemblies (supercomplex SCI(1)III(2)IV(1) and megacomplex MCI(2)III(2)IV(2)).

The protein localises to the mitochondrion inner membrane. It functions in the pathway energy metabolism; oxidative phosphorylation. Functionally, component of the cytochrome c oxidase, the last enzyme in the mitochondrial electron transport chain which drives oxidative phosphorylation. The respiratory chain contains 3 multisubunit complexes succinate dehydrogenase (complex II, CII), ubiquinol-cytochrome c oxidoreductase (cytochrome b-c1 complex, complex III, CIII) and cytochrome c oxidase (complex IV, CIV), that cooperate to transfer electrons derived from NADH and succinate to molecular oxygen, creating an electrochemical gradient over the inner membrane that drives transmembrane transport and the ATP synthase. Cytochrome c oxidase is the component of the respiratory chain that catalyzes the reduction of oxygen to water. Electrons originating from reduced cytochrome c in the intermembrane space (IMS) are transferred via the dinuclear copper A center (CU(A)) of subunit 2 and heme A of subunit 1 to the active site in subunit 1, a binuclear center (BNC) formed by heme A3 and copper B (CU(B)). The BNC reduces molecular oxygen to 2 water molecules using 4 electrons from cytochrome c in the IMS and 4 protons from the mitochondrial matrix. Plays a role in proper central nervous system (CNS) development in vertebrates. In Mus musculus (Mouse), this protein is Cytochrome c oxidase subunit 7B, mitochondrial (Cox7b).